The sequence spans 436 residues: 3-ketoacyl-CoA thiolase (436 aa).

The Acyl-thioester intermediate role is filled by cysteine 99. Active-site proton acceptor residues include histidine 392 and cysteine 422.

This sequence belongs to the thiolase-like superfamily. Thiolase family. Heterotetramer of two alpha chains (FadJ) and two beta chains (FadI).

The protein resides in the cytoplasm. The catalysed reaction is an acyl-CoA + acetyl-CoA = a 3-oxoacyl-CoA + CoA. Its pathway is lipid metabolism; fatty acid beta-oxidation. In terms of biological role, catalyzes the final step of fatty acid oxidation in which acetyl-CoA is released and the CoA ester of a fatty acid two carbons shorter is formed. The chain is 3-ketoacyl-CoA thiolase from Shewanella baltica (strain OS185).